The following is a 144-amino-acid chain: Small ribosomal subunit protein bS6 (144 aa).

A disordered region spans residues 97–144 (EEGPSAMMRKADRDRERDERGGPREGGFRSERGPRRPREEETTASVEE). Residues 105-137 (RKADRDRERDERGGPREGGFRSERGPRRPREEE) are compositionally biased toward basic and acidic residues.

It belongs to the bacterial ribosomal protein bS6 family.

Functionally, binds together with bS18 to 16S ribosomal RNA. This is Small ribosomal subunit protein bS6 from Afipia carboxidovorans (strain ATCC 49405 / DSM 1227 / KCTC 32145 / OM5) (Oligotropha carboxidovorans).